The chain runs to 569 residues: Myotubularin-related protein 9 (569 aa).

The 380-residue stretch at 134–513 (GWSAFDLEQE…QCIKIWDRLF (380 aa)) folds into the Myotubularin phosphatase domain.

Belongs to the protein-tyrosine phosphatase family. Non-receptor class myotubularin subfamily. As to quaternary structure, heterodimer with lipid phosphatase mtm-6.

Its subcellular location is the cytoplasm. It localises to the membrane. May act as a regulatory subunit for mtm-6. In association with phosphatase mtm-6, plays a role in endosome trafficking probably by regulating phosphatidylinositol-3-phosphate levels. Regulates fluid phase endocytosis in coelomocytes. Regulates posterior migration of QL neuroblast descendants and the anterior migration of QR neuroblast descendants and HSN neurons during larval development probably by controlling Wnt ligand secretion through the regulation of sorting receptor mig-14 trafficking. Involved in the formation of correct synapse number in DA9 motor neurons. This Caenorhabditis elegans protein is Myotubularin-related protein 9.